Reading from the N-terminus, the 279-residue chain is DegV domain-containing protein SP_1112 (279 aa).

Positions 4–277 (IKIVTDSSVT…ENAWAILIRY (274 aa)) constitute a DegV domain. Positions 62 and 94 each coordinate hexadecanoate.

Functionally, may bind long-chain fatty acids, such as palmitate, and may play a role in lipid transport or fatty acid metabolism. This chain is DegV domain-containing protein SP_1112, found in Streptococcus pneumoniae serotype 4 (strain ATCC BAA-334 / TIGR4).